Consider the following 249-residue polypeptide: Vesicle-associated membrane protein-associated protein A (249 aa).

A2 carries the N-acetylalanine modification. Over 2 to 227 (ASASGAMAKH…VSFRDNVTSP (226 aa)) the chain is Cytoplasmic. The MSP domain occupies 14 to 131 (ILVLDPPSDL…MDSKLRCVFE (118 aa)). A phosphorylated FFAT motif binding region spans residues 50–53 (KVKT). Position 125 is an N6-acetyllysine (K125). The segment covering 135 to 144 (ENDKLNDMEP) has biased composition (basic and acidic residues). A disordered region spans residues 135-166 (ENDKLNDMEPSKAVPLNASKQDGPLPKPHSVS). At S166 the chain carries Phosphoserine. A coiled-coil region spans residues 168–207 (NDTETRKLMEECKRLQGEMMKLSEENRHLRDEGLRLRKVA). At T170 the chain carries Phosphothreonine. Phosphoserine occurs at positions 214, 216, and 219. Residues 228–248 (LPSLLVVIAAIFIGFFLGKFI) form a helical; Anchor for type IV membrane protein membrane-spanning segment.

Belongs to the VAMP-associated protein (VAP) (TC 9.B.17) family. In terms of assembly, homodimer; disulfide-linked. Heterodimer with VAPB. Interacts with VAMP1, VAMP2, STX1A, BET1, SEC22C and with the C-terminal domain of OCLN. Interacts (via MSP domain) with OSBPL1A (via FFAT motif). Interacts (via MSP domain) with ZFYVE27; may retain ZFYVE27 in the endoplasmic reticulum and regulate its function in cell projections formation. Interacts with OSBP. Interacts (via C-terminus) with RSAD2/viperin (via C-terminus). Interacts with IFITM3. Interacts with OSBPL3 (phosphorylated form). Interacts with KIF5A in a ZFYVE27-dependent manner. Interacts (via MSP domain) with STARD3 (via phosphorylated FFAT motif); this interaction recruits VAPA to the endosome. Interacts with STARD3NL (via FFAT motif). Interacts with CERT1. Interacts with PLEKHA3 and SACM1L to form a ternary complex. Interacts with VPS13A (via FFAT motif). Interacts with RB1CC1 (via phosphorylated FFAT motif), MIGA2 (via phosphorylated FFAT motif), RMDN3 (via phosphorylated FFAT motif), KCNB1 (via phosphorylated FFAT motif) and KCNB2 (via phosphorylated FFAT motif). Interacts (via MSP domain) with WDR44; the interactions connect the endoplasmic reticulum (ER) with the endosomal tubule. In terms of tissue distribution, ubiquitous.

The protein resides in the endoplasmic reticulum membrane. The protein localises to the cell membrane. It localises to the cell junction. Its subcellular location is the tight junction. It is found in the nucleus membrane. Functionally, endoplasmic reticulum (ER)-anchored protein that mediates the formation of contact sites between the ER and endosomes via interaction with FFAT motif-containing proteins such as STARD3 or WDR44. STARD3-VAPA interaction enables cholesterol transfer from the ER to endosomes. Via interaction with WDR44 participates in neosynthesized protein export. In addition, recruited to the plasma membrane through OSBPL3 binding. The OSBPL3-VAPA complex stimulates RRAS signaling which in turn attenuates integrin beta-1 (ITGB1) activation at the cell surface. With OSBPL3, may regulate ER morphology. May play a role in vesicle trafficking. This chain is Vesicle-associated membrane protein-associated protein A, found in Rattus norvegicus (Rat).